The sequence spans 187 residues: uncharacterized protein (187 aa).

The signal sequence occupies residues 1-25 (MSKFVKTAIAAAMVMGAFTSTATIA).

Belongs to the fimbrial protein family.

Part of the yfcOPQRSUV fimbrial operon. Could contribute to adhesion to various surfaces in specific environmental niches. Increases adhesion to eukaryotic T24 bladder epithelial cells in the absence of fim genes. This is an uncharacterized protein from Escherichia coli (strain K12).